A 128-amino-acid polypeptide reads, in one-letter code: NADPH-dependent 7-cyano-7-deazaguanine reductase (128 aa).

Cysteine 34 serves as the catalytic Thioimide intermediate. Aspartate 41 functions as the Proton donor in the catalytic mechanism. Residues 56–58 (IEL) and 75–76 (HE) contribute to the substrate site.

This sequence belongs to the GTP cyclohydrolase I family. QueF type 1 subfamily.

It localises to the cytoplasm. The enzyme catalyses 7-aminomethyl-7-carbaguanine + 2 NADP(+) = 7-cyano-7-deazaguanine + 2 NADPH + 3 H(+). The protein operates within tRNA modification; tRNA-queuosine biosynthesis. Functionally, catalyzes the NADPH-dependent reduction of 7-cyano-7-deazaguanine (preQ0) to 7-aminomethyl-7-deazaguanine (preQ1). The polypeptide is NADPH-dependent 7-cyano-7-deazaguanine reductase (Ruthia magnifica subsp. Calyptogena magnifica).